We begin with the raw amino-acid sequence, 180 residues long: Adenine phosphoribosyltransferase (180 aa).

Belongs to the purine/pyrimidine phosphoribosyltransferase family. Homodimer.

The protein resides in the cytoplasm. The enzyme catalyses AMP + diphosphate = 5-phospho-alpha-D-ribose 1-diphosphate + adenine. Its pathway is purine metabolism; AMP biosynthesis via salvage pathway; AMP from adenine: step 1/1. In terms of biological role, catalyzes a salvage reaction resulting in the formation of AMP, that is energically less costly than de novo synthesis. The sequence is that of Adenine phosphoribosyltransferase from Mycoplasma genitalium (strain ATCC 33530 / DSM 19775 / NCTC 10195 / G37) (Mycoplasmoides genitalium).